A 552-amino-acid chain; its full sequence is Thermosome subunit beta (552 aa).

Residues 531–552 are disordered; it reads AGKKGGSEPGGKKEKEEKSSED. A compositionally biased stretch (basic and acidic residues) spans 540–552; the sequence is GGKKEKEEKSSED.

The protein belongs to the TCP-1 chaperonin family. As to quaternary structure, forms a heterooligomeric complex of two stacked nine-membered rings; one of alpha and the other of beta subunits. Sometimes called a 'rosettasome'.

The protein localises to the cytoplasm. It catalyses the reaction ATP + H2O = ADP + phosphate + H(+). Functionally, molecular chaperone; binds unfolded polypeptides in vitro, stimulates protein folding and has ATPase activity. One of the most abundant proteins in the cell at all temperatures. This chain is Thermosome subunit beta (thsB), found in Saccharolobus shibatae (strain ATCC 51178 / DSM 5389 / JCM 8931 / NBRC 15437 / B12) (Sulfolobus shibatae).